Here is a 644-residue protein sequence, read N- to C-terminus: Exoribonuclease 2 (644 aa).

The 328-residue stretch at 189-516 (RRDLTALDFV…NHRLLKAIIK (328 aa)) folds into the RNB domain. One can recognise an S1 motif domain in the interval 561 to 643 (DTRFAAEILD…ETRSIIARPA (83 aa)).

The protein belongs to the RNR ribonuclease family. RNase II subfamily.

The protein localises to the cytoplasm. The catalysed reaction is Exonucleolytic cleavage in the 3'- to 5'-direction to yield nucleoside 5'-phosphates.. In terms of biological role, involved in mRNA degradation. Hydrolyzes single-stranded polyribonucleotides processively in the 3' to 5' direction. The polypeptide is Exoribonuclease 2 (Klebsiella pneumoniae (strain 342)).